Reading from the N-terminus, the 362-residue chain is UDP-N-acetylglucosamine--N-acetylmuramyl-(pentapeptide) pyrophosphoryl-undecaprenol N-acetylglucosamine transferase (362 aa).

UDP-N-acetyl-alpha-D-glucosamine-binding positions include 10–12 (TGG), asparagine 124, serine 194, isoleucine 249, and glutamine 294.

This sequence belongs to the glycosyltransferase 28 family. MurG subfamily.

The protein resides in the cell membrane. The enzyme catalyses Mur2Ac(oyl-L-Ala-gamma-D-Glu-L-Lys-D-Ala-D-Ala)-di-trans,octa-cis-undecaprenyl diphosphate + UDP-N-acetyl-alpha-D-glucosamine = beta-D-GlcNAc-(1-&gt;4)-Mur2Ac(oyl-L-Ala-gamma-D-Glu-L-Lys-D-Ala-D-Ala)-di-trans,octa-cis-undecaprenyl diphosphate + UDP + H(+). The protein operates within cell wall biogenesis; peptidoglycan biosynthesis. In terms of biological role, cell wall formation. Catalyzes the transfer of a GlcNAc subunit on undecaprenyl-pyrophosphoryl-MurNAc-pentapeptide (lipid intermediate I) to form undecaprenyl-pyrophosphoryl-MurNAc-(pentapeptide)GlcNAc (lipid intermediate II). This chain is UDP-N-acetylglucosamine--N-acetylmuramyl-(pentapeptide) pyrophosphoryl-undecaprenol N-acetylglucosamine transferase, found in Pediococcus pentosaceus (strain ATCC 25745 / CCUG 21536 / LMG 10740 / 183-1w).